A 935-amino-acid polypeptide reads, in one-letter code: Dual 3',5'-cyclic-AMP and -GMP phosphodiesterase 11A (935 aa).

The segment at 41-125 (RHSSGQGASD…ASQKELRKSF (85 aa)) is disordered. Low complexity predominate over residues 54–69 (ALAGASSLAQSSARGS). A phosphoserine mark is found at Ser162, Ser163, and Ser239. 2 consecutive GAF domains span residues 217–370 (DLTS…GIAI) and 402–558 (DLEK…GLGI). Residue Ser424 coordinates 3',5'-cyclic GMP. Residues 588–912 (SKAEVDKFKA…RKWEELHQKR (325 aa)) form the PDEase domain. His664 serves as the catalytic Proton donor. A divalent metal cation is bound by residues His668, His704, Asp705, and Asp816. A disordered region spans residues 915 to 935 (VSAASPVPSSPSPAVAGEDRL).

The protein belongs to the cyclic nucleotide phosphodiesterase family. A divalent metal cation is required as a cofactor. In terms of tissue distribution, isoform 1 is expressed in brain, heart, kidney and liver, but not in prostate. Isoform 2 is specifically expressed in testis. Isoform 3 is expressed in various tissues including brain, lung, skeletal muscle, spleen, testis and prostate.

It is found in the cytoplasm. The protein localises to the cytosol. The enzyme catalyses 3',5'-cyclic GMP + H2O = GMP + H(+). It catalyses the reaction 3',5'-cyclic AMP + H2O = AMP + H(+). Inhibited by 3-isobutyl-1-methylxanthine (IBMX), zaprinast and dipyridamole. cGMP acts as an allosteric activator. In terms of biological role, plays a role in signal transduction by regulating the intracellular concentration of cyclic nucleotides cAMP and cGMP. Catalyzes the hydrolysis of both cAMP and cGMP to 5'-AMP and 5'-GMP, respectively. In Rattus norvegicus (Rat), this protein is Dual 3',5'-cyclic-AMP and -GMP phosphodiesterase 11A.